Consider the following 660-residue polypeptide: Epithelial sodium channel subunit gamma (660 aa).

The Cytoplasmic portion of the chain corresponds to 1-55; the sequence is MSKSGKKLTQKLKKNLPVTGPQAPTLYELMQWYCLNTNTHGCRRIVVSKGRLRRW. The helical transmembrane segment at 56–76 threads the bilayer; sequence IWISLTLCAVAVIFWQCALLL. At 77–537 the chain is on the extracellular side; it reads MSYYSVSASI…VTLLSNFGGQ (461 aa). Disulfide bonds link Cys101-Cys286, Cys209-Cys217, Cys263-Cys270, Cys375-Cys460, Cys397-Cys456, Cys401-Cys452, Cys410-Cys437, and Cys412-Cys426. Residues 538 to 558 traverse the membrane as a helical segment; it reads LGLWMSCSMICVLEIIEVFFI. Residues 559-660 lie on the Cytoplasmic side of the membrane; that stretch reads DSFWVVLRQR…IDSDEDVERL (102 aa).

Belongs to the amiloride-sensitive sodium channel (TC 1.A.6) family. SCNN1G subfamily. Component of the heterotrimeric epithelial sodium channel (ENaC) composed of an alpha/SCNN1A, a beta/SCNN1B and a gamma/SCNN1G subunit.

Its subcellular location is the apical cell membrane. It catalyses the reaction Na(+)(in) = Na(+)(out). With respect to regulation, originally identified and characterized by its inhibition by the diuretic drug amiloride. In terms of biological role, this is one of the three pore-forming subunits of the heterotrimeric epithelial sodium channel (ENaC), a critical regulator of sodium balance and fluid homeostasis. ENaC operates in epithelial tissues, where it mediates the electrodiffusion of sodium ions from extracellular fluid through the apical membrane of cells, with water following osmotically. The sequence is that of Epithelial sodium channel subunit gamma (scnn1g-a) from Xenopus laevis (African clawed frog).